A 31-amino-acid polypeptide reads, in one-letter code: Photosystem I reaction center subunit XII (31 aa).

A helical membrane pass occupies residues 7 to 26; the sequence is QIYIALLTALIPAFFALKLG.

This sequence belongs to the PsaM family.

The protein resides in the plastid. It is found in the chloroplast thylakoid membrane. The sequence is that of Photosystem I reaction center subunit XII from Euglena mutabilis.